We begin with the raw amino-acid sequence, 47 residues long: uncharacterized protein (47 aa).

The region spanning 2–47 (LRVRKRDGRLEEFSRAKIVRTCLRAGASKKIAEKVAEELKRGYTMG) is the ATP-cone domain.

This is an uncharacterized protein from Archaeoglobus fulgidus (strain ATCC 49558 / DSM 4304 / JCM 9628 / NBRC 100126 / VC-16).